Consider the following 290-residue polypeptide: Microtubule-associated protein P320 (290 aa).

Repeats lie at residues 1 to 38 (SEYR…PIDP), 39 to 76 (SEYR…PIDP), 77 to 114 (SEYR…PIDP), 115 to 152 (SEYR…PIDP), 153 to 190 (SEYR…PIDP), 191 to 228 (SEYR…PIDP), 229 to 266 (SEYR…PIDP), and 267 to 290 (SEYR…DESH). Residues 251–290 (SHFLTTTHEAYKPIDPSEYRQKRTVGEEVTTDMRHVDESH) form a disordered region. Over residues 259–290 (EAYKPIDPSEYRQKRTVGEEVTTDMRHVDESH) the composition is skewed to basic and acidic residues.

The protein resides in the cytoplasm. It localises to the cytoskeleton. This is Microtubule-associated protein P320 from Trypanosoma brucei brucei.